We begin with the raw amino-acid sequence, 303 residues long: UDP-3-O-acyl-N-acetylglucosamine deacetylase (303 aa).

The Zn(2+) site is built by His-78, His-237, and Asp-241. The Proton donor role is filled by His-264.

The protein belongs to the LpxC family. Zn(2+) is required as a cofactor.

The catalysed reaction is a UDP-3-O-[(3R)-3-hydroxyacyl]-N-acetyl-alpha-D-glucosamine + H2O = a UDP-3-O-[(3R)-3-hydroxyacyl]-alpha-D-glucosamine + acetate. Its pathway is glycolipid biosynthesis; lipid IV(A) biosynthesis; lipid IV(A) from (3R)-3-hydroxytetradecanoyl-[acyl-carrier-protein] and UDP-N-acetyl-alpha-D-glucosamine: step 2/6. Its function is as follows. Catalyzes the hydrolysis of UDP-3-O-myristoyl-N-acetylglucosamine to form UDP-3-O-myristoylglucosamine and acetate, the committed step in lipid A biosynthesis. The protein is UDP-3-O-acyl-N-acetylglucosamine deacetylase of Teredinibacter turnerae (strain ATCC 39867 / T7901).